Consider the following 130-residue polypeptide: Small ribosomal subunit protein uS9 (130 aa).

Belongs to the universal ribosomal protein uS9 family.

The chain is Small ribosomal subunit protein uS9 from Neisseria gonorrhoeae (strain ATCC 700825 / FA 1090).